The chain runs to 130 residues: Small ribosomal subunit protein uS9 (130 aa).

The protein belongs to the universal ribosomal protein uS9 family.

The protein is Small ribosomal subunit protein uS9 of Burkholderia vietnamiensis (strain G4 / LMG 22486) (Burkholderia cepacia (strain R1808)).